Here is a 158-residue protein sequence, read N- to C-terminus: MFRIGQGFDVHEFAEGRPLIIGGITIPYEKGLLGHSDADVLLHTIADACLGAIAAGDIGKHFPDTDPAFKDADSAVLLQKVWEFVREQGYELGNLDCTIIAQKPKMAPHIESMRKRISELLETSIDNINVKATTTEKLGFTGREEGIASQAVVLLQKK.

2 residues coordinate a divalent metal cation: D9 and H11. Residues 9–11 (DVH) and 35–36 (HS) contribute to the 4-CDP-2-C-methyl-D-erythritol 2-phosphate site. H43 contributes to the a divalent metal cation binding site. 4-CDP-2-C-methyl-D-erythritol 2-phosphate is bound by residues 57-59 (DIG), 62-66 (FPDTD), 101-107 (AQKPKMA), 133-136 (TTTE), F140, and R143.

It belongs to the IspF family. In terms of assembly, homotrimer. The cofactor is a divalent metal cation.

It carries out the reaction 4-CDP-2-C-methyl-D-erythritol 2-phosphate = 2-C-methyl-D-erythritol 2,4-cyclic diphosphate + CMP. Its pathway is isoprenoid biosynthesis; isopentenyl diphosphate biosynthesis via DXP pathway; isopentenyl diphosphate from 1-deoxy-D-xylulose 5-phosphate: step 4/6. Involved in the biosynthesis of isopentenyl diphosphate (IPP) and dimethylallyl diphosphate (DMAPP), two major building blocks of isoprenoid compounds. Catalyzes the conversion of 4-diphosphocytidyl-2-C-methyl-D-erythritol 2-phosphate (CDP-ME2P) to 2-C-methyl-D-erythritol 2,4-cyclodiphosphate (ME-CPP) with a corresponding release of cytidine 5-monophosphate (CMP). The chain is 2-C-methyl-D-erythritol 2,4-cyclodiphosphate synthase from Bacillus cytotoxicus (strain DSM 22905 / CIP 110041 / 391-98 / NVH 391-98).